A 373-amino-acid chain; its full sequence is Lipoyl amidotransferase LIPT1, mitochondrial (373 aa).

Residues 1 to 25 (MLIPLSMKNCFRLLCQHKVPAAGFK) constitute a mitochondrion transit peptide. One can recognise a BPL/LPL catalytic domain in the interval 57 to 243 (LEGKPILFLW…EYAAHHQVDG (187 aa)). 4 residues coordinate (R)-lipoyl-5'-AMP: Tyr-107, Lys-151, Lys-161, and Thr-179.

This sequence belongs to the LplA family.

It localises to the mitochondrion. It carries out the reaction (R)-lipoyl-5'-AMP + L-lysyl-[lipoyl-carrier protein] = N(6)-[(R)-lipoyl]-L-lysyl-[lipoyl-carrier protein] + AMP + 2 H(+). It catalyses the reaction N(6)-[(R)-lipoyl]-L-lysyl-[glycine-cleavage complex H protein] + L-lysyl-[lipoyl-carrier protein] = L-lysyl-[glycine-cleavage complex H protein] + N(6)-[(R)-lipoyl]-L-lysyl-[lipoyl-carrier protein]. The protein operates within protein modification; protein lipoylation via exogenous pathway; protein N(6)-(lipoyl)lysine from lipoate: step 2/2. Its function is as follows. Lipoyl amidotransferase that catalyzes the transfer of lipoyl moieties from lipoyl-protein H of the glycine cleavage system (lipoyl-GCSH) to E2 subunits of the pyruvate dehydrogenase complex (PDCE2). Unable to catalyze the transfer of octanoyl from octanoyl-GCSH to PDCE2. In vitro, it is also able to catalyze the transfer of the lipoyl group from lipoyl-AMP to the specific lysine residue of lipoyl domains of lipoate-dependent enzymes but this reaction may not be physiologically relevant. The chain is Lipoyl amidotransferase LIPT1, mitochondrial from Mus musculus (Mouse).